The chain runs to 718 residues: Putative methyltransferase NSUN7 (718 aa).

The active-site Nucleophile is the C439. Disordered stretches follow at residues 536-557 (GKSSKREKKKKKSKTSLTKGAT), 578-616 (ANLSETVTKPPLPQKNTAQVGASSQTRKPNKLAPHPAVP), and 694-718 (SLSRKEEKPKDDTPSSLLRPPRRWL). Positions 538–549 (SSKREKKKKKSK) are enriched in basic residues. The segment covering 591-604 (QKNTAQVGASSQTR) has biased composition (polar residues). The span at 696–706 (SRKEEKPKDDT) shows a compositional bias: basic and acidic residues.

This sequence belongs to the class I-like SAM-binding methyltransferase superfamily. RsmB/NOP family.

May have S-adenosyl-L-methionine-dependent methyl-transferase activity. This Homo sapiens (Human) protein is Putative methyltransferase NSUN7 (NSUN7).